Here is a 134-residue protein sequence, read N- to C-terminus: ATP synthase epsilon chain (134 aa).

This sequence belongs to the ATPase epsilon chain family. In terms of assembly, F-type ATPases have 2 components, CF(1) - the catalytic core - and CF(0) - the membrane proton channel. CF(1) has five subunits: alpha(3), beta(3), gamma(1), delta(1), epsilon(1). CF(0) has three main subunits: a, b and c.

The protein localises to the cellular thylakoid membrane. In terms of biological role, produces ATP from ADP in the presence of a proton gradient across the membrane. The polypeptide is ATP synthase epsilon chain (Prochlorococcus marinus (strain AS9601)).